The primary structure comprises 116 residues: uncharacterized protein (116 aa).

This is an uncharacterized protein from Acheta domesticus (House cricket).